A 182-amino-acid chain; its full sequence is Large ribosomal subunit protein uL5 (182 aa).

It belongs to the universal ribosomal protein uL5 family. Part of the 50S ribosomal subunit; part of the 5S rRNA/L5/L18/L25 subcomplex. Contacts the 5S rRNA and the P site tRNA. Forms a bridge to the 30S subunit in the 70S ribosome.

Functionally, this is one of the proteins that bind and probably mediate the attachment of the 5S RNA into the large ribosomal subunit, where it forms part of the central protuberance. In the 70S ribosome it contacts protein S13 of the 30S subunit (bridge B1b), connecting the 2 subunits; this bridge is implicated in subunit movement. Contacts the P site tRNA; the 5S rRNA and some of its associated proteins might help stabilize positioning of ribosome-bound tRNAs. This Borreliella afzelii (strain PKo) (Borrelia afzelii) protein is Large ribosomal subunit protein uL5.